The primary structure comprises 67 residues: Large ribosomal subunit protein bL32 (67 aa).

The segment covering methionine 1–glutamine 19 has biased composition (basic residues). Residues methionine 1–alanine 22 form a disordered region.

This sequence belongs to the bacterial ribosomal protein bL32 family.

The sequence is that of Large ribosomal subunit protein bL32 from Kocuria rhizophila (strain ATCC 9341 / DSM 348 / NBRC 103217 / DC2201).